We begin with the raw amino-acid sequence, 501 residues long: Ribose import ATP-binding protein RbsA (501 aa).

ABC transporter domains are found at residues 5–241 and 252–495; these read LQLK…VGRK and APGE…VGKL. 37-44 is an ATP binding site; that stretch reads GENGAGKS.

Belongs to the ABC transporter superfamily. Ribose importer (TC 3.A.1.2.1) family. As to quaternary structure, the complex is composed of an ATP-binding protein (RbsA), two transmembrane proteins (RbsC) and a solute-binding protein (RbsB).

The protein localises to the cell inner membrane. It carries out the reaction D-ribose(out) + ATP + H2O = D-ribose(in) + ADP + phosphate + H(+). Part of the ABC transporter complex RbsABC involved in ribose import. Responsible for energy coupling to the transport system. The sequence is that of Ribose import ATP-binding protein RbsA from Salmonella typhimurium (strain LT2 / SGSC1412 / ATCC 700720).